We begin with the raw amino-acid sequence, 455 residues long: Serine--tRNA ligase (455 aa).

Residue Thr-252 to Glu-254 coordinates L-serine. ATP contacts are provided by residues Arg-283–Glu-285 and Val-299. Glu-306 provides a ligand contact to L-serine. Glu-370–Ser-373 contributes to the ATP binding site. Thr-406 lines the L-serine pocket.

Belongs to the class-II aminoacyl-tRNA synthetase family. Type-1 seryl-tRNA synthetase subfamily. In terms of assembly, homodimer. The tRNA molecule binds across the dimer.

It localises to the cytoplasm. The enzyme catalyses tRNA(Ser) + L-serine + ATP = L-seryl-tRNA(Ser) + AMP + diphosphate + H(+). It carries out the reaction tRNA(Sec) + L-serine + ATP = L-seryl-tRNA(Sec) + AMP + diphosphate + H(+). The protein operates within aminoacyl-tRNA biosynthesis; selenocysteinyl-tRNA(Sec) biosynthesis; L-seryl-tRNA(Sec) from L-serine and tRNA(Sec): step 1/1. Its function is as follows. Catalyzes the attachment of serine to tRNA(Ser). Is also able to aminoacylate tRNA(Sec) with serine, to form the misacylated tRNA L-seryl-tRNA(Sec), which will be further converted into selenocysteinyl-tRNA(Sec). In Pyrococcus furiosus (strain ATCC 43587 / DSM 3638 / JCM 8422 / Vc1), this protein is Serine--tRNA ligase.